The primary structure comprises 342 residues: Uroporphyrinogen decarboxylase (342 aa).

Residues arginine 22–arginine 26, phenylalanine 41, aspartate 72, tyrosine 146, serine 201, and histidine 317 contribute to the substrate site.

The protein belongs to the uroporphyrinogen decarboxylase family. As to quaternary structure, homodimer.

The protein localises to the cytoplasm. The catalysed reaction is uroporphyrinogen III + 4 H(+) = coproporphyrinogen III + 4 CO2. Its pathway is porphyrin-containing compound metabolism; protoporphyrin-IX biosynthesis; coproporphyrinogen-III from 5-aminolevulinate: step 4/4. Functionally, catalyzes the decarboxylation of four acetate groups of uroporphyrinogen-III to yield coproporphyrinogen-III. In Orientia tsutsugamushi (strain Boryong) (Rickettsia tsutsugamushi), this protein is Uroporphyrinogen decarboxylase.